The chain runs to 62 residues: Conotoxin Cal12.2e (62 aa).

An N-terminal signal peptide occupies residues 1–19 (MKLTCVLVVLLLVLPFGDL).

It belongs to the conotoxin O1 superfamily. Post-translationally, contains 4 disulfide bonds. Expressed by the venom duct.

The protein localises to the secreted. In terms of biological role, probable neurotoxin. The sequence is that of Conotoxin Cal12.2e from Californiconus californicus (California cone).